The sequence spans 468 residues: UDP-N-acetylmuramate--L-alanine ligase (468 aa).

Residue 114 to 120 (GTHGKTT) coordinates ATP.

Belongs to the MurCDEF family.

It localises to the cytoplasm. It carries out the reaction UDP-N-acetyl-alpha-D-muramate + L-alanine + ATP = UDP-N-acetyl-alpha-D-muramoyl-L-alanine + ADP + phosphate + H(+). It participates in cell wall biogenesis; peptidoglycan biosynthesis. Functionally, cell wall formation. The sequence is that of UDP-N-acetylmuramate--L-alanine ligase from Rhodopseudomonas palustris (strain HaA2).